The chain runs to 322 residues: Phospho-N-acetylmuramoyl-pentapeptide-transferase (322 aa).

Transmembrane regions (helical) follow at residues 9–29 (IALV…INFM), 54–74 (TMGG…VAAW), 82–102 (VWIL…DDGI), 122–142 (IIIA…FGLY), 145–165 (FAGV…WLVG), 176–196 (LDGL…YIAF), 200–220 (NFAV…FFIF), 227–247 (IFMG…VSIM), 255–275 (LLIG…VISF), and 302–322 (VDIV…AIWG).

It belongs to the glycosyltransferase 4 family. MraY subfamily. Requires Mg(2+) as cofactor.

The protein localises to the cell membrane. It catalyses the reaction UDP-N-acetyl-alpha-D-muramoyl-L-alanyl-gamma-D-glutamyl-L-lysyl-D-alanyl-D-alanine + di-trans,octa-cis-undecaprenyl phosphate = Mur2Ac(oyl-L-Ala-gamma-D-Glu-L-Lys-D-Ala-D-Ala)-di-trans,octa-cis-undecaprenyl diphosphate + UMP. The protein operates within cell wall biogenesis; peptidoglycan biosynthesis. In terms of biological role, catalyzes the initial step of the lipid cycle reactions in the biosynthesis of the cell wall peptidoglycan: transfers peptidoglycan precursor phospho-MurNAc-pentapeptide from UDP-MurNAc-pentapeptide onto the lipid carrier undecaprenyl phosphate, yielding undecaprenyl-pyrophosphoryl-MurNAc-pentapeptide, known as lipid I. This is Phospho-N-acetylmuramoyl-pentapeptide-transferase from Lactobacillus acidophilus (strain ATCC 700396 / NCK56 / N2 / NCFM).